The sequence spans 267 residues: U6 snRNA phosphodiesterase 1 (267 aa).

Residues 1–13 (MSSAPLVGYSSSG) show a composition bias toward polar residues. A disordered region spans residues 1-74 (MSSAPLVGYS…DSAKHGGRIR (74 aa)). The Proton acceptor role is filled by H122. An AMP-binding site is contributed by 122-124 (HVS). UMP-binding positions include Q166, Y204, and 208–212 (SFHIS). AMP is bound by residues Y204 and 206 to 212 (DPSFHIS). H210 functions as the Proton donor in the catalytic mechanism.

Belongs to the 2H phosphoesterase superfamily. USB1 family. As to quaternary structure, interacts with PLRG1, CDC5L and PRPF19.

The protein localises to the nucleus. The catalysed reaction is a 3'-end uridylyl-uridine-RNA = a 3'-end 2',3'-cyclophospho-uridine-RNA + uridine. It carries out the reaction a 3'-end uridylyl-adenosine-RNA = a 3'-end 2',3'-cyclophospho-uridine-RNA + adenosine. Its function is as follows. 3'-5' RNA exonuclease that trims the 3' end of oligo(U) and oligo(A) tracts of the pre-U6 small nuclear RNA (snRNA) molecule, leading to the formation of a mature U6 snRNA 3' end-terminated with a 2',3'-cyclic phosphate. Participates in the U6 snRNA 3' end processing that prevents U6 snRNA degradation. In addition also removes uridines from the 3' end of U6atac snRNA and possibly the vault RNA VTRNA1-1. The protein is U6 snRNA phosphodiesterase 1 of Mus musculus (Mouse).